The chain runs to 333 residues: D-fructose 1,6-bisphosphatase class 2/sedoheptulose 1,7-bisphosphatase (333 aa).

Residues Asp33, Glu57, Asp85, and Glu88 each contribute to the Mn(2+) site. Substrate is bound by residues 88-90, Tyr119, 164-166, and 186-188; these read EGT, RAR, and DGD. Glu213 lines the Mn(2+) pocket.

Belongs to the FBPase class 2 family. In terms of assembly, homotetramer. The cofactor is Mn(2+).

The enzyme catalyses beta-D-fructose 1,6-bisphosphate + H2O = beta-D-fructose 6-phosphate + phosphate. The catalysed reaction is D-sedoheptulose 1,7-bisphosphate + H2O = D-sedoheptulose 7-phosphate + phosphate. The protein operates within carbohydrate biosynthesis; Calvin cycle. Catalyzes the hydrolysis of fructose 1,6-bisphosphate (Fru 1,6-P2) and sedoheptulose 1,7-bisphosphate (Sed 1,7-P2) to fructose 6-phosphate and sedoheptulose 7-phosphate, respectively. The chain is D-fructose 1,6-bisphosphatase class 2/sedoheptulose 1,7-bisphosphatase from Prochlorococcus marinus subsp. pastoris (strain CCMP1986 / NIES-2087 / MED4).